The sequence spans 104 residues: Protein MHF2 homolog (104 aa).

It belongs to the CENP-X/MHF2 family.

It is found in the nucleus. Its function is as follows. Acts in the same pathway as FANCM to restrain class II meiotic crossing over (CO), and acts with FANCM during meiosis to repair interstrand cross-links (ICLs). The protein is Protein MHF2 homolog of Arabidopsis thaliana (Mouse-ear cress).